The chain runs to 243 residues: 2-C-methyl-D-erythritol 4-phosphate cytidylyltransferase (243 aa).

The protein belongs to the IspD/TarI cytidylyltransferase family. IspD subfamily.

It catalyses the reaction 2-C-methyl-D-erythritol 4-phosphate + CTP + H(+) = 4-CDP-2-C-methyl-D-erythritol + diphosphate. Its pathway is isoprenoid biosynthesis; isopentenyl diphosphate biosynthesis via DXP pathway; isopentenyl diphosphate from 1-deoxy-D-xylulose 5-phosphate: step 2/6. Catalyzes the formation of 4-diphosphocytidyl-2-C-methyl-D-erythritol from CTP and 2-C-methyl-D-erythritol 4-phosphate (MEP). The sequence is that of 2-C-methyl-D-erythritol 4-phosphate cytidylyltransferase from Aeromonas hydrophila subsp. hydrophila (strain ATCC 7966 / DSM 30187 / BCRC 13018 / CCUG 14551 / JCM 1027 / KCTC 2358 / NCIMB 9240 / NCTC 8049).